Here is a 60-residue protein sequence, read N- to C-terminus: Large ribosomal subunit protein bL33 (60 aa).

This sequence belongs to the bacterial ribosomal protein bL33 family.

This chain is Large ribosomal subunit protein bL33, found in Chlorobium limicola (strain DSM 245 / NBRC 103803 / 6330).